The primary structure comprises 843 residues: Tetratricopeptide repeat protein 7B (843 aa).

The TPR 1 repeat unit spans residues 97–131; that stretch reads QESNLVMAKLTYVEGDYKEALNIYARVGLDDLPLT. Ser160 and Ser202 each carry phosphoserine. 6 TPR repeats span residues 219–252, 363–396, 397–430, 479–514, 516–548, and 549–582; these read ETGL…VETR, SVVY…AFEE, FHLW…KPDD, TYSL…SPTD, QAAF…QGDD, and ANSL…YPEN. Residues Ser625, Ser629, Ser630, Ser673, Ser677, Ser678, and Ser681 each carry the phosphoserine modification. TPR repeat units lie at residues 696–729, 730–763, 765–797, and 798–831; these read AQIW…FPMS, HNVL…SPTH, KSMQ…NSTA, and HEVW…EASS.

As to quaternary structure, component of a phosphatidylinositol 4-kinase (PI4K) complex, composed of PI4KA, EFR3 (EFR3A or EFR3B), TTC7 (TTC7A or TTC7B) and HYCC (HYCC1 or HYCC2). Interacts with PI4KA, interaction is direct. Interacts with EFR3 (EFR3A or EFR3B), interaction is direct. Interacts with HYCC (HYCC1 or HYCC2), interaction is direct. Association with the PI4K complex is strongly reduced by TMEM150A.

The protein localises to the cytoplasm. Its subcellular location is the cytosol. The protein resides in the cell membrane. Functionally, component of a complex required to localize phosphatidylinositol 4-kinase (PI4K) to the plasma membrane. The complex acts as a regulator of phosphatidylinositol 4-phosphate (PtdIns(4)P) synthesis. In the complex, plays a central role in bridging PI4KA to EFR3B and HYCC1, via direct interactions. The sequence is that of Tetratricopeptide repeat protein 7B from Mus musculus (Mouse).